Here is a 237-residue protein sequence, read N- to C-terminus: MQFPSLSCGILIKRYKRFLADILLPNGEQITLHCPNTGAMTGCATTGDTVWFSTSDNPKRKYAHTWELTQTQAGDFICVNTQRANQLVQEALEKRWIAELAEYQTVLPEQKYGSENSRIDFLLKADNQPDCFAEVKSTTLLTENDLGMFPDAKTERGQKHLRELAAIAESGQQAVILFAILHTGIQRFAVAKQIDPQYAALFEQAKNVGVKVLAYKAQIELVLGKPISMNLQFSCEI.

Belongs to the SfsA family.

The sequence is that of Sugar fermentation stimulation protein homolog from Actinobacillus pleuropneumoniae serotype 5b (strain L20).